The primary structure comprises 144 residues: Effector EagT6 (144 aa).

In terms of assembly, homodimer. Two dimers interact with Tse6; this interaction is crucial for Tse6 loading onto VgrG1a.

Plays an essential role in toxin Tse6 delivery to target cells and specifically in the loading of Tse6 onto VgrG1a. The protein is Effector EagT6 of Pseudomonas aeruginosa (strain ATCC 15692 / DSM 22644 / CIP 104116 / JCM 14847 / LMG 12228 / 1C / PRS 101 / PAO1).